The chain runs to 499 residues: DAZ protein 1 (499 aa).

The disordered stretch occupies residues 1–29 (MMSPPLRYQKDQQNQQHQQNQSQQAAHQM). Residues 12–28 (QQNQQHQQNQSQQAAHQ) show a composition bias toward low complexity. Positions 66–144 (PNRIFVGGFP…SRKLNLGPAI (79 aa)) constitute an RRM domain. The span at 195-224 (FVYPPLRSQDQSRQQSEQQTTPQNSPTNLQ) shows a compositional bias: low complexity. Disordered regions lie at residues 195–304 (FVYP…NNGG) and 406–499 (YPGN…TKNN). Positions 214–236 (TTPQNSPTNLQHQQSPQVFFGGD) constitute a DAZ domain. Residues 251 to 262 (EKSEVSPEKHES) show a composition bias toward basic and acidic residues. Over residues 263–279 (VSPQPLLPNQNVLNTQY) the composition is skewed to polar residues. Low complexity predominate over residues 280–304 (SQGQQQWNSNVQQQQQQQMDSNNGG). Residues 406–425 (YPGNFSQQHTMGNNENTFSL) are compositionally biased toward polar residues. Positions 438-447 (KPSECQDKKT) are enriched in basic and acidic residues. A compositionally biased stretch (low complexity) spans 480–499 (LSPLSASLQSLAISSPTKNN).

It belongs to the RRM DAZ family. Germline specific. More strongly expressed during oogenesis than during spermatogenesis. During the larval stages, it is more abundant at the distal region than the proximal region of the gonad. In young adult hermaphrodites, it is expressed at a very low level in the distal mitotic region of the gonad, and begins to accumulate in the meiotic transition zone. Highly expressed in the proximal pachytene region. Not expressed in mature oocytes. Not expressed in the spermatheca. Weakly or not expressed in the germline of adult males.

In terms of biological role, RNA-binding protein that plays a central role in oogenesis, but not for spermatogenesis. Required for meiotic entry and germline differentiation, at the pachytene stage of meiosis I of female germline regardless of the sex of the soma. May act by regulating translation of specific mRNAs, possibly by binding to their 3'-UTR. The chain is DAZ protein 1 (daz-1) from Caenorhabditis elegans.